The chain runs to 287 residues: Ribosomal RNA small subunit methyltransferase A (287 aa).

N35, V37, G62, E83, D113, and N131 together coordinate S-adenosyl-L-methionine.

This sequence belongs to the class I-like SAM-binding methyltransferase superfamily. rRNA adenine N(6)-methyltransferase family. RsmA subfamily.

The protein resides in the cytoplasm. It carries out the reaction adenosine(1518)/adenosine(1519) in 16S rRNA + 4 S-adenosyl-L-methionine = N(6)-dimethyladenosine(1518)/N(6)-dimethyladenosine(1519) in 16S rRNA + 4 S-adenosyl-L-homocysteine + 4 H(+). In terms of biological role, specifically dimethylates two adjacent adenosines (A1518 and A1519) in the loop of a conserved hairpin near the 3'-end of 16S rRNA in the 30S particle. May play a critical role in biogenesis of 30S subunits. The chain is Ribosomal RNA small subunit methyltransferase A from Thermobifida fusca (strain YX).